A 49-amino-acid chain; its full sequence is SPbeta prophage-derived uncharacterized protein YorN (49 aa).

In Bacillus subtilis (strain 168), this protein is SPbeta prophage-derived uncharacterized protein YorN (yorN).